The sequence spans 431 residues: Glutamate-1-semialdehyde 2,1-aminomutase (431 aa).

Lys-269 carries the N6-(pyridoxal phosphate)lysine modification.

Belongs to the class-III pyridoxal-phosphate-dependent aminotransferase family. HemL subfamily. Homodimer. Requires pyridoxal 5'-phosphate as cofactor.

It localises to the cytoplasm. It carries out the reaction (S)-4-amino-5-oxopentanoate = 5-aminolevulinate. It functions in the pathway porphyrin-containing compound metabolism; protoporphyrin-IX biosynthesis; 5-aminolevulinate from L-glutamyl-tRNA(Glu): step 2/2. The chain is Glutamate-1-semialdehyde 2,1-aminomutase from Francisella tularensis subsp. tularensis (strain WY96-3418).